The following is a 295-amino-acid chain: RNA polymerase sigma factor RpoH (295 aa).

The tract at residues 52 to 121 is sigma-70 factor domain-2; sequence MVTSHLRLVA…IQEYILRSWS (70 aa). Positions 76–79 match the Interaction with polymerase core subunit RpoC motif; that stretch reads EVIS. The segment at 230 to 281 is sigma-70 factor domain-4; sequence AMVELTDRERHILTERRLKDDPTTLEELAAQYGVSRERVRQIEVRAFEKLQK. Positions 254–273 form a DNA-binding region, H-T-H motif; that stretch reads LEELAAQYGVSRERVRQIEV.

Belongs to the sigma-70 factor family. RpoH subfamily. In terms of assembly, interacts with the RNA polymerase core enzyme.

The protein resides in the cytoplasm. Sigma factors are initiation factors that promote the attachment of RNA polymerase to specific initiation sites and are then released. This sigma factor is involved in regulation of expression of heat shock genes. In Caulobacter vibrioides (strain ATCC 19089 / CIP 103742 / CB 15) (Caulobacter crescentus), this protein is RNA polymerase sigma factor RpoH.